Here is a 106-residue protein sequence, read N- to C-terminus: HIG1 domain family member 2A (106 aa).

At alanine 2 the chain carries N-acetylalanine. Residues 20–106 (VIEGFSPTVY…LAASAMKSQA (87 aa)) enclose the HIG1 domain. 2 consecutive transmembrane segments (helical) span residues 47 to 67 (PMVP…LYCF) and 83 to 103 (IAAQ…SAMK).

Associates with cytochrome c oxidase (COX, complex IV); proposed complex component.

The protein resides in the mitochondrion membrane. It localises to the mitochondrion inner membrane. In terms of biological role, proposed subunit of cytochrome c oxidase (COX, complex IV), which is the terminal component of the mitochondrial respiratory chain that catalyzes the reduction of oxygen to water. May be involved in cytochrome c oxidase activity. May play a role in the assembly of respiratory supercomplexes. This is HIG1 domain family member 2A (Higd2a) from Mus musculus (Mouse).